The primary structure comprises 347 residues: Transcription factor EC (347 aa).

The tract at residues 1–119 (MTLDHQIINP…GLTSASCPSS (119 aa)) is necessary for transcriptional transactivation. Positions 139-192 (QKKDNHNLIERRRRYNINYRIKELGTLIPKSNDPDMRWNKGTILKASVEYIKWL) constitute a bHLH domain. Residues 271–347 (PSPEFCDQAI…SFSSDDGDEL (77 aa)) are necessary for transcriptional transactivation. A disordered region spans residues 319–347 (DPLLSATSPAVSKESSRRSSFSSDDGDEL). Low complexity predominate over residues 326–341 (SPAVSKESSRRSSFSS).

Belongs to the MiT/TFE family. Homodimer. Forms heterodimers with MITF and TFE3. Interacts with MITF.

It localises to the nucleus. Transcriptional regulator that acts as a repressor or an activator. Acts as a transcriptional repressor on minimal promoter containing element F (that includes an E-box sequence). Binds to element F in an E-box sequence-specific manner. Acts as a transcriptional transactivator on the proximal promoter region of the tartrate-resistant acid phosphatase (TRAP) E-box containing promoter. Collaborates with MITF in target gene activation. Acts as a transcriptional repressor on minimal promoter containing mu E3 enhancer sequence. Binds to mu E3 DNA sequence of the immunoglobulin heavy-chain gene enhancer. Binds DNA in a homo- or heterodimeric form. The polypeptide is Transcription factor EC (TFEC) (Pan troglodytes (Chimpanzee)).